The following is a 274-amino-acid chain: Small ribosomal subunit protein uS2 (274 aa).

The protein belongs to the universal ribosomal protein uS2 family.

In Syntrophobacter fumaroxidans (strain DSM 10017 / MPOB), this protein is Small ribosomal subunit protein uS2.